The sequence spans 207 residues: Large ribosomal subunit protein uL4 (207 aa).

The tract at residues 44–78 (LRQGTHKTKTRSEVRGGGRKPWRQKGTGRARQGSI) is disordered. The span at 60–71 (GGRKPWRQKGTG) shows a compositional bias: basic residues.

The protein belongs to the universal ribosomal protein uL4 family. As to quaternary structure, part of the 50S ribosomal subunit.

Its function is as follows. One of the primary rRNA binding proteins, this protein initially binds near the 5'-end of the 23S rRNA. It is important during the early stages of 50S assembly. It makes multiple contacts with different domains of the 23S rRNA in the assembled 50S subunit and ribosome. Forms part of the polypeptide exit tunnel. In Halalkalibacterium halodurans (strain ATCC BAA-125 / DSM 18197 / FERM 7344 / JCM 9153 / C-125) (Bacillus halodurans), this protein is Large ribosomal subunit protein uL4.